The sequence spans 100 residues: Protein SAMBA (100 aa).

A disordered region spans residues 1 to 40 (MNGASPAHSLVSTTAVAGGGGSSGAAAGLDDFHFPPDIPS).

In terms of assembly, interacts with CDC27B and CYCA2-3. Expressed in embryos, germinating seeds, hypocotyls and pollen grains.

Functionally, plays an important role in organ size control. Acts as negative regulator of the anaphase-promoting complex/cyclosome (APC/C). Regulates cell proliferation during early development by targeting CYCA2-3 for APC/C-mediated degradation. Required for mitosis I during pollen microspore development. In Arabidopsis thaliana (Mouse-ear cress), this protein is Protein SAMBA.